The chain runs to 210 residues: Dephospho-CoA kinase (210 aa).

One can recognise a DPCK domain in the interval 4–202 (WVGLTGGIGS…AFYSGIFASK (199 aa)). 12-17 (GSGKSA) provides a ligand contact to ATP.

This sequence belongs to the CoaE family.

The protein localises to the cytoplasm. The enzyme catalyses 3'-dephospho-CoA + ATP = ADP + CoA + H(+). It participates in cofactor biosynthesis; coenzyme A biosynthesis; CoA from (R)-pantothenate: step 5/5. In terms of biological role, catalyzes the phosphorylation of the 3'-hydroxyl group of dephosphocoenzyme A to form coenzyme A. In Neisseria meningitidis serogroup A / serotype 4A (strain DSM 15465 / Z2491), this protein is Dephospho-CoA kinase.